Here is a 62-residue protein sequence, read N- to C-terminus: Photosystem II reaction center protein Z (62 aa).

2 helical membrane-spanning segments follow: residues 8-28 (TVLALIATSFLMVIGVPVIFA) and 41-61 (FSGALLWISLVFAVGILNSFV).

It belongs to the PsbZ family. In terms of assembly, PSII is composed of 1 copy each of membrane proteins PsbA, PsbB, PsbC, PsbD, PsbE, PsbF, PsbH, PsbI, PsbJ, PsbK, PsbL, PsbM, PsbT, PsbY, PsbZ, Psb30/Ycf12, at least 3 peripheral proteins of the oxygen-evolving complex and a large number of cofactors. It forms dimeric complexes.

It is found in the plastid. The protein localises to the chloroplast thylakoid membrane. Functionally, may control the interaction of photosystem II (PSII) cores with the light-harvesting antenna, regulates electron flow through the 2 photosystem reaction centers. PSII is a light-driven water plastoquinone oxidoreductase, using light energy to abstract electrons from H(2)O, generating a proton gradient subsequently used for ATP formation. The protein is Photosystem II reaction center protein Z of Mesostigma viride (Green alga).